A 448-amino-acid polypeptide reads, in one-letter code: Asparagine--tRNA ligase (448 aa).

It belongs to the class-II aminoacyl-tRNA synthetase family. Homodimer.

The protein localises to the cytoplasm. The catalysed reaction is tRNA(Asn) + L-asparagine + ATP = L-asparaginyl-tRNA(Asn) + AMP + diphosphate + H(+). In Streptococcus agalactiae serotype Ia (strain ATCC 27591 / A909 / CDC SS700), this protein is Asparagine--tRNA ligase.